Here is a 606-residue protein sequence, read N- to C-terminus: Alpha-1,2-mannosyltransferase MNN23 (606 aa).

The Cytoplasmic segment spans residues 1–14 (MSINFLSIPRNRFK). Residues 15-35 (AIGVLSVTCILIYVILHSSII) traverse the membrane as a helical segment. Topologically, residues 36 to 606 (TTDFDVSDYG…QVAWLSKSQN (571 aa)) are extracellular. Residues 59 to 86 (DNGENLKDPQPELDNDKGNGETDTTTSN) form a disordered region. A compositionally biased stretch (basic and acidic residues) spans 62 to 78 (ENLKDPQPELDNDKGNG).

Belongs to the MNN1/MNT family.

The protein resides in the golgi apparatus membrane. The protein operates within protein modification; protein glycosylation. Its function is as follows. Alpha-1,2-mannosyltransferase required for cell wall integrity. Responsible for addition of the first alpha-1,2-linked mannose to form the branches on the mannan backbone of oligosaccharides. Addition of alpha-1,2-mannose is required for stabilization of the alpha-1,6-mannose backbone and hence regulates mannan fibril length; and is important for both immune recognition and virulence. This chain is Alpha-1,2-mannosyltransferase MNN23 (MNN23), found in Candida albicans (strain SC5314 / ATCC MYA-2876) (Yeast).